Consider the following 197-residue polypeptide: Probable nicotinate-nucleotide adenylyltransferase (197 aa).

Belongs to the NadD family.

The enzyme catalyses nicotinate beta-D-ribonucleotide + ATP + H(+) = deamido-NAD(+) + diphosphate. It functions in the pathway cofactor biosynthesis; NAD(+) biosynthesis; deamido-NAD(+) from nicotinate D-ribonucleotide: step 1/1. Catalyzes the reversible adenylation of nicotinate mononucleotide (NaMN) to nicotinic acid adenine dinucleotide (NaAD). This is Probable nicotinate-nucleotide adenylyltransferase from Borrelia garinii subsp. bavariensis (strain ATCC BAA-2496 / DSM 23469 / PBi) (Borreliella bavariensis).